A 423-amino-acid chain; its full sequence is Glutamyl-tRNA reductase (423 aa).

Residues Thr-51–Arg-54, Ser-99, Glu-104–Gln-106, and Gln-110 contribute to the substrate site. The Nucleophile role is filled by Cys-52. Gly-179–Gly-184 is an NADP(+) binding site.

Belongs to the glutamyl-tRNA reductase family. Homodimer.

It catalyses the reaction (S)-4-amino-5-oxopentanoate + tRNA(Glu) + NADP(+) = L-glutamyl-tRNA(Glu) + NADPH + H(+). It functions in the pathway porphyrin-containing compound metabolism; protoporphyrin-IX biosynthesis; 5-aminolevulinate from L-glutamyl-tRNA(Glu): step 1/2. Functionally, catalyzes the NADPH-dependent reduction of glutamyl-tRNA(Glu) to glutamate 1-semialdehyde (GSA). This is Glutamyl-tRNA reductase from Methanoculleus marisnigri (strain ATCC 35101 / DSM 1498 / JR1).